The sequence spans 340 residues: N-acetyl-gamma-glutamyl-phosphate reductase (340 aa).

Cys149 is a catalytic residue.

Belongs to the NAGSA dehydrogenase family. Type 1 subfamily.

The protein resides in the cytoplasm. It carries out the reaction N-acetyl-L-glutamate 5-semialdehyde + phosphate + NADP(+) = N-acetyl-L-glutamyl 5-phosphate + NADPH + H(+). Its pathway is amino-acid biosynthesis; L-arginine biosynthesis; N(2)-acetyl-L-ornithine from L-glutamate: step 3/4. In terms of biological role, catalyzes the NADPH-dependent reduction of N-acetyl-5-glutamyl phosphate to yield N-acetyl-L-glutamate 5-semialdehyde. The protein is N-acetyl-gamma-glutamyl-phosphate reductase of Vesicomyosocius okutanii subsp. Calyptogena okutanii (strain HA).